The following is a 1403-amino-acid chain: Sushi, nidogen and EGF-like domain-containing protein 1 (1403 aa).

An N-terminal signal peptide occupies residues 1-24 (MRRGAAWALLLAAALGLGARGVRA). Positions 103 to 258 (AFWADVDNRR…GRWAFRIDDA (156 aa)) constitute an NIDO domain. 3 EGF-like domains span residues 268-309 (TTSV…RRCH), 311-347 (DVNE…PTCE), and 349-385 (AQSP…ATCE). Disulfide bonds link C272–C284, C278–C297, C299–C308, C315–C326, C320–C335, C337–C346, C353–C364, C358–C373, C375–C384, C391–C402, C396–C411, C413–C422, C433–C444, C438–C453, C455–C464, C472–C480, C474–C488, and C490–C499. N292 is a glycosylation site (N-linked (GlcNAc...) asparagine). The region spanning 387–423 (DVDECSSDPCLNGGSCVDLVGNYSCICVEPFEGPQCE) is the EGF-like 4; calcium-binding domain. An N-linked (GlcNAc...) asparagine glycan is attached at N408. EGF-like domains lie at 429–465 (VPSP…LDCR) and 468–500 (ILND…LLCE). An N-linked (GlcNAc...) asparagine glycan is attached at N484. N-linked (GlcNAc...) asparagine glycosylation occurs at N536. 4 consecutive EGF-like domains span residues 541 to 577 (LPSP…RHCE), 580 to 616 (RPHL…RHCE), 619 to 655 (KPDS…RHCE), and 657 to 693 (APSP…HRCQ). Cystine bridges form between C545–C556, C550–C565, C567–C576, C584–C595, C589–C604, C606–C615, C623–C634, C628–C643, C645–C654, C661–C672, C666–C681, C683–C692, C698–C739, C724–C751, C757–C768, C762–C777, C779–C788, C795–C806, C800–C815, C817–C826, C833–C844, C838–C853, C855–C864, C871–C882, C876–C891, and C893–C902. The region spanning 696–753 (VDCGQPEEVKHATMRLNGTRMGSVALYTCDPGFSLSVLSHMRVCQPQGVWSQPPQCIE) is the Sushi domain. An N-linked (GlcNAc...) asparagine glycan is attached at N712. One can recognise an EGF-like 11; calcium-binding domain in the interval 753–789 (EVDECQSQPCLHKGSCQDLIAGYQCLCSPGYEGVHCE). In terms of domain architecture, EGF-like 12; calcium-binding spans 791–827 (ETDECQAQPCRNGGSCRDLPGAFICQCPEGFVGTHCE). 2 EGF-like domains span residues 829 to 865 (EVDA…YNCE) and 867 to 903 (VSDP…KDCT). The N-linked (GlcNAc...) asparagine glycan is linked to N886. 3 consecutive Fibronectin type-III domains span residues 908–1006 (PPTA…TRPR), 1007–1105 (PIED…TRPL), and 1106–1200 (PPAN…SPRD). 5 N-linked (GlcNAc...) asparagine glycosylation sites follow: N977, N1015, N1109, N1139, and N1298. The tract at residues 1295–1314 (LPKNNSKDTESTPGSCSEDT) is disordered. Residues 1305–1314 (STPGSCSEDT) are compositionally biased toward polar residues. The 37-residue stretch at 1306-1342 (TPGSCSEDTCQNGGTCVPGANAHSCDCRPGFKGRHCE) folds into the EGF-like 15 domain. 3 disulfide bridges follow: C1310-C1321, C1315-C1330, and C1332-C1341.

In terms of processing, phosphorylated on serine and threonine residues. N-glycosylated. As to expression, expressed in liver.

It localises to the secreted. It is found in the extracellular space. Its subcellular location is the extracellular matrix. The chain is Sushi, nidogen and EGF-like domain-containing protein 1 from Rattus norvegicus (Rat).